A 671-amino-acid polypeptide reads, in one-letter code: Nucleolar GTP-binding protein 1 (671 aa).

The OBG-type G domain occupies 169-350; it reads RTVLICGYPN…VKNAACERLL (182 aa). GTP-binding positions include 175–182, 221–225, and 289–292; these read GYPNVGKS, DTPGI, and NKTD. The tract at residues 516 to 671 is disordered; sequence VAQNRSTVPR…KRGKGKTDRR (156 aa). The span at 595 to 605 shows a compositional bias: polar residues; the sequence is RAMSISRSQSR. Basic residues-rich tracts occupy residues 631 to 640 and 654 to 671; these read NKSHKKRDKN and RPKHLFSGKRGKGKTDRR.

The protein belongs to the TRAFAC class OBG-HflX-like GTPase superfamily. OBG GTPase family. NOG subfamily.

The protein resides in the nucleus. It localises to the nucleolus. Its function is as follows. Involved in the biogenesis of the 60S ribosomal subunit. This chain is Nucleolar GTP-binding protein 1, found in Arabidopsis thaliana (Mouse-ear cress).